A 136-amino-acid polypeptide reads, in one-letter code: Small ribosomal subunit protein eS6 (136 aa).

This sequence belongs to the eukaryotic ribosomal protein eS6 family.

The sequence is that of Small ribosomal subunit protein eS6 from Methanosarcina mazei (strain ATCC BAA-159 / DSM 3647 / Goe1 / Go1 / JCM 11833 / OCM 88) (Methanosarcina frisia).